Reading from the N-terminus, the 467-residue chain is Multiple inositol polyphosphate phosphatase 1 (467 aa).

The N-terminal stretch at 1–15 (MRLLILLLLPLVAIA) is a signal peptide. Residue H67 is part of the active site. N-linked (GlcNAc...) asparagine glycosylation is found at N120, N159, and N234. A lipid anchor (GPI-anchor amidated glycine) is attached at G441. Positions 442 to 467 (GAPSLGSGVGGLLATTLAAMLVYLMH) are cleaved as a propeptide — removed in mature form.

It belongs to the histidine acid phosphatase family. MINPP1 subfamily. N-glycosylated.

It localises to the cell membrane. The protein resides in the apical cell membrane. It is found in the basolateral cell membrane. The protein localises to the cell projection. Its subcellular location is the filopodium. It localises to the cell junction. The catalysed reaction is (2R)-2,3-bisphosphoglycerate + H2O = (2R)-2-phosphoglycerate + phosphate. It catalyses the reaction 1D-myo-inositol hexakisphosphate + H2O = 1D-myo-inositol 1,2,4,5,6-pentakisphosphate + phosphate. The enzyme catalyses 1D-myo-inositol 1,2,4,5,6-pentakisphosphate + H2O = 1D-myo-inositol 1,2,5,6-tetrakisphosphate + phosphate. It carries out the reaction 1D-myo-inositol 1,2,5,6-tetrakisphosphate + H2O = 1D-myo-inositol 1,2,6-trisphosphate + phosphate. Its function is as follows. Probable multiple inositol polyphosphate phosphatase that hydrolyzes 1D-myo-inositol 1,3,4,5,6-pentakisphosphate (InsP5[2OH]) and 1D-myo-inositol hexakisphosphate (InsP6) to a range of less phosphorylated inositol phosphates. This regulates the availability of these various small molecule second messengers and metal chelators which control many aspects of cell physiology. May have a dual substrate specificity, and function as a 2,3-bisphosphoglycerate 3-phosphatase hydrolyzing 2,3-bisphosphoglycerate to 2-phosphoglycerate. 2,3-bisphosphoglycerate (BPG) is formed as part of the Rapoport-Luebering glycolytic bypass. Has a role in embryonic tracheal development where it localizes to the leading edge of actively migrating branches. In these leading cells, enhances formation and/or maintenance of filopodia which may drive branch migration and elongation by cell-cell intercalation. The function in tracheal morphogenesis is dependent on its inositol polyphosphate phosphatase activity. This Drosophila melanogaster (Fruit fly) protein is Multiple inositol polyphosphate phosphatase 1.